The sequence spans 266 residues: DNA-directed RNA polymerase subunit Rpo3 (266 aa).

The [3Fe-4S] cluster site is built by Cys-205, Cys-208, and Cys-211.

Belongs to the archaeal Rpo3/eukaryotic RPB3 RNA polymerase subunit family. Part of the RNA polymerase complex. The cofactor is [3Fe-4S] cluster.

The protein localises to the cytoplasm. It carries out the reaction RNA(n) + a ribonucleoside 5'-triphosphate = RNA(n+1) + diphosphate. DNA-dependent RNA polymerase (RNAP) catalyzes the transcription of DNA into RNA using the four ribonucleoside triphosphates as substrates. This chain is DNA-directed RNA polymerase subunit Rpo3, found in Methanosarcina mazei (strain ATCC BAA-159 / DSM 3647 / Goe1 / Go1 / JCM 11833 / OCM 88) (Methanosarcina frisia).